The primary structure comprises 145 residues: MKGLLQRVRSARVEVGTEVVGAIDQGILVLVGIEPQDTRASADKLLHKLLNYRVFSDADGKMNLSLREVSGGLLLVSQFTLAADTKSGLRAGFSKAAAPALGAELFDYLLSQARIAHPVVAAGQFGADMQVHLINDGPVTFLFET.

The Gly-cisPro motif, important for rejection of L-amino acids motif lies at glycine 137–proline 138.

The protein belongs to the DTD family. As to quaternary structure, homodimer.

It is found in the cytoplasm. It carries out the reaction glycyl-tRNA(Ala) + H2O = tRNA(Ala) + glycine + H(+). It catalyses the reaction a D-aminoacyl-tRNA + H2O = a tRNA + a D-alpha-amino acid + H(+). Its function is as follows. An aminoacyl-tRNA editing enzyme that deacylates mischarged D-aminoacyl-tRNAs. Also deacylates mischarged glycyl-tRNA(Ala), protecting cells against glycine mischarging by AlaRS. Acts via tRNA-based rather than protein-based catalysis; rejects L-amino acids rather than detecting D-amino acids in the active site. By recycling D-aminoacyl-tRNA to D-amino acids and free tRNA molecules, this enzyme counteracts the toxicity associated with the formation of D-aminoacyl-tRNA entities in vivo and helps enforce protein L-homochirality. The sequence is that of D-aminoacyl-tRNA deacylase from Pseudomonas syringae pv. tomato (strain ATCC BAA-871 / DC3000).